The primary structure comprises 417 residues: NADH-quinone oxidoreductase subunit D (417 aa).

Belongs to the complex I 49 kDa subunit family. As to quaternary structure, NDH-1 is composed of 14 different subunits. Subunits NuoB, C, D, E, F, and G constitute the peripheral sector of the complex.

The protein localises to the cell inner membrane. It catalyses the reaction a quinone + NADH + 5 H(+)(in) = a quinol + NAD(+) + 4 H(+)(out). Its function is as follows. NDH-1 shuttles electrons from NADH, via FMN and iron-sulfur (Fe-S) centers, to quinones in the respiratory chain. The immediate electron acceptor for the enzyme in this species is believed to be ubiquinone. Couples the redox reaction to proton translocation (for every two electrons transferred, four hydrogen ions are translocated across the cytoplasmic membrane), and thus conserves the redox energy in a proton gradient. This chain is NADH-quinone oxidoreductase subunit D, found in Francisella tularensis subsp. mediasiatica (strain FSC147).